A 284-amino-acid polypeptide reads, in one-letter code: 1D-myo-inositol 2-acetamido-2-deoxy-alpha-D-glucopyranoside deacetylase (284 aa).

The Zn(2+) site is built by His12, Asp15, and His146.

This sequence belongs to the MshB deacetylase family. Requires Zn(2+) as cofactor.

The enzyme catalyses 1D-myo-inositol 2-acetamido-2-deoxy-alpha-D-glucopyranoside + H2O = 1D-myo-inositol 2-amino-2-deoxy-alpha-D-glucopyranoside + acetate. In terms of biological role, catalyzes the deacetylation of 1D-myo-inositol 2-acetamido-2-deoxy-alpha-D-glucopyranoside (GlcNAc-Ins) in the mycothiol biosynthesis pathway. The polypeptide is 1D-myo-inositol 2-acetamido-2-deoxy-alpha-D-glucopyranoside deacetylase (Mycolicibacterium gilvum (strain PYR-GCK) (Mycobacterium gilvum (strain PYR-GCK))).